A 606-amino-acid chain; its full sequence is Pickpocket protein 28 (606 aa).

The tract at residues 1 to 26 (MRTLTESRRRQSGSSGCKKDSESDDD) is disordered. Transmembrane regions (helical) follow at residues 66 to 86 (IFFG…ISNV) and 490 to 510 (GLLG…FFYI).

Belongs to the amiloride-sensitive sodium channel (TC 1.A.6) family. Expressed in water-sensing neurons in taste bristles on the proboscis but not in carbonation-sensing taste peg neurons (at protein level). Expressed in the tracheal system.

It is found in the cell membrane. Its function is as follows. Osmosensitive ion channel that mediates the cellular and behavioral response to water. Plays an essential role in gustatory water reception. Part of a complex that plays a role in tracheal liquid clearance. Probable role in sodium transport. The sequence is that of Pickpocket protein 28 (ppk28) from Drosophila melanogaster (Fruit fly).